The primary structure comprises 361 residues: Feruloyl CoA ortho-hydroxylase 1 (361 aa).

A Fe2OG dioxygenase domain is found at 204–312 (TKESLFMGSI…RISVPIFVNP (109 aa)). Tyrosine 220 lines the 2-oxoglutarate pocket. Fe cation contacts are provided by histidine 235, aspartate 237, and histidine 293. Arginine 303 and serine 305 together coordinate 2-oxoglutarate.

This sequence belongs to the iron/ascorbate-dependent oxidoreductase family. L-ascorbate serves as cofactor. The cofactor is Fe(2+). In terms of tissue distribution, highly expressed in roots, especially in the cortex.

It catalyses the reaction (E)-feruloyl-CoA + 2-oxoglutarate + O2 = (E)-6-hydroxyferuloyl-CoA + succinate + CO2. It carries out the reaction (E)-6-hydroxyferuloyl-CoA = scopoletin + CoA. It participates in phenylpropanoid metabolism. Its function is as follows. 2-oxoglutarate (OG)- and Fe(II)-dependent dioxygenase (2OGD) involved in scopoletin biosynthesis. Converts feruloyl CoA into 6'-hydroxyferuloyl CoA but has no activity with ferulic acid, feruloylquinic acid, caffeic acid, caffeoyl CoA, p-coumaric acid, cinnamic acid, cinnamoyl CoA or benzoyl CoA. Required for the production and secretion of compounds (e.g. fluorescent coumarins) that facilitate the mobilization and uptake of iron from sources with low bioavailability or in high pH-induced iron deficiency conditions. Involved in the pathway of sideretin biosynthesis from feruloyl CoA, a redox-active catecholic metabolite exuded by roots in response to iron deficiency in order to facilitate the uptake of iron; this pathway consists in the successive conversion from feruloyl CoA to scopoletin, from scopoletin to fraxetin and from fraxetin to sideretin. Catalyzes the biosynthesis of scopoletin from feruloyl CoA. The protein is Feruloyl CoA ortho-hydroxylase 1 of Arabidopsis thaliana (Mouse-ear cress).